Here is a 1192-residue protein sequence, read N- to C-terminus: Chromosome partition protein Smc (1192 aa).

ATP is bound at residue 31–38; the sequence is PNGSGKSN. 4 coiled-coil regions span residues 164–197, 234–292, 333–369, and 396–464; these read AGISRFKAKKVEAERRLERVQTNLTRLGDIVDEV, LTLS…RSEL, SAIADLRKTIAALEVAEAELADVQQKKESIAAKRDVE, and EHEA…DAKV. The 115-residue stretch at 522–636 folds into the SMC hinge domain; sequence KDLVGIVADC…LVDTLATAIG (115 aa). Coiled-coil stretches lie at residues 676–736, 772–902, and 986–1030; these read RSEL…AKLH, ELAV…EREA, and GSVN…INAD.

This sequence belongs to the SMC family. In terms of assembly, homodimer.

It localises to the cytoplasm. Required for chromosome condensation and partitioning. This Rhodopirellula baltica (strain DSM 10527 / NCIMB 13988 / SH1) protein is Chromosome partition protein Smc.